We begin with the raw amino-acid sequence, 142 residues long: Transcriptional regulator MraZ (142 aa).

SpoVT-AbrB domains follow at residues 5-47 (EYQH…TINE) and 76-119 (ACIV…SREK).

This sequence belongs to the MraZ family. Forms oligomers.

Its subcellular location is the cytoplasm. The protein localises to the nucleoid. The sequence is that of Transcriptional regulator MraZ from Clostridium botulinum (strain Alaska E43 / Type E3).